The following is a 548-amino-acid chain: MAKEIKYDMKARELMLAGVNALADAVAVTHGPKGRNVVIDKAWGAPTVTKDGVTVAKEIELENKFENMGAQMVKEVASKTSDTAGDGTTTATVLARAIYEEGMKLVVAGNNPMAIKRGIDKACEAAVKSLMNLSKPTKEQREIAQVGTISANTDETIGNIIAEAMNKVGKEGVITVEEAKSMDTTLDVVEGMQFDRGYISPYFVTDSEKMVCSLEDPYILIHEKKISNMKDLLPLLEQTAKMGKPLLIVAEDVEGEALATLVVNRLRGTLQIAAVKAPGFGDRRKAMLEDIAILTGGTVVSEDMGIKLENMSLADLGKCKRVSIDKDNTTIVDGAGARSALEGRVKQIRAQIDDTTSDYDREKLQERLAKLIGGVAVINVGAATEVEMKEKKARVEDALNATRAAVEEGIVPGGGVALVRAIDAVAKAKITGEQKIGARVVMRALEAPLRMIANNAGMEGSVVLDKVKNTEGSFGYNADTDTYEDLIEAGVIDPTKVVRLALQNACSIAGLMLTTEAMIADKPDENAGGMPAMPGGGMGGMGGMGGMM.

ATP is bound by residues 29–32, K50, 86–90, G414, and D493; these read THGP and DGTTT.

This sequence belongs to the chaperonin (HSP60) family. As to quaternary structure, forms a cylinder of 14 subunits composed of two heptameric rings stacked back-to-back. Interacts with the co-chaperonin GroES.

The protein resides in the cytoplasm. It carries out the reaction ATP + H2O + a folded polypeptide = ADP + phosphate + an unfolded polypeptide.. Functionally, together with its co-chaperonin GroES, plays an essential role in assisting protein folding. The GroEL-GroES system forms a nano-cage that allows encapsulation of the non-native substrate proteins and provides a physical environment optimized to promote and accelerate protein folding. This chain is Chaperonin GroEL, found in Desulfatibacillum aliphaticivorans.